Reading from the N-terminus, the 420-residue chain is UDP-N-acetylglucosamine 1-carboxyvinyltransferase (420 aa).

22 to 23 (KN) is a binding site for phosphoenolpyruvate. Residue R93 coordinates UDP-N-acetyl-alpha-D-glucosamine. The active-site Proton donor is C117. Residue C117 is modified to 2-(S-cysteinyl)pyruvic acid O-phosphothioketal. 2 residues coordinate UDP-N-acetyl-alpha-D-glucosamine: D307 and I329.

This sequence belongs to the EPSP synthase family. MurA subfamily.

The protein resides in the cytoplasm. The enzyme catalyses phosphoenolpyruvate + UDP-N-acetyl-alpha-D-glucosamine = UDP-N-acetyl-3-O-(1-carboxyvinyl)-alpha-D-glucosamine + phosphate. It functions in the pathway cell wall biogenesis; peptidoglycan biosynthesis. Cell wall formation. Adds enolpyruvyl to UDP-N-acetylglucosamine. In Shewanella pealeana (strain ATCC 700345 / ANG-SQ1), this protein is UDP-N-acetylglucosamine 1-carboxyvinyltransferase.